The sequence spans 92 residues: Large ribosomal subunit protein bL25 (92 aa).

It belongs to the bacterial ribosomal protein bL25 family. In terms of assembly, part of the 50S ribosomal subunit; part of the 5S rRNA/L5/L18/L25 subcomplex. Contacts the 5S rRNA. Binds to the 5S rRNA independently of L5 and L18.

Functionally, this is one of the proteins that binds to the 5S RNA in the ribosome where it forms part of the central protuberance. This is Large ribosomal subunit protein bL25 from Photobacterium profundum (strain SS9).